The sequence spans 85 residues: Small cysteine and glycine repeat-containing protein 5 (85 aa).

A 10 X 2 AA repeats of CG region spans residues Cys4–Gly69.

Belongs to the KRTAP type 28 family.

In terms of biological role, in the hair cortex, hair keratin intermediate filaments are embedded in an interfilamentous matrix, consisting of hair keratin-associated proteins (KRTAP), which are essential for the formation of a rigid and resistant hair shaft through their extensive disulfide bond cross-linking with abundant cysteine residues of hair keratins. The matrix proteins include the high-sulfur and high-glycine-tyrosine keratins. The chain is Small cysteine and glycine repeat-containing protein 5 from Homo sapiens (Human).